The chain runs to 408 residues: Serine/threonine-protein kinase ATG1t (408 aa).

Residues tyrosine 7–valine 272 form the Protein kinase domain. ATP contacts are provided by residues leucine 13–valine 21 and lysine 36. Aspartate 129 functions as the Proton acceptor in the catalytic mechanism.

This sequence belongs to the protein kinase superfamily. Ser/Thr protein kinase family.

It is found in the cytoplasmic vesicle. The protein resides in the autophagosome. In terms of biological role, serine/threonine protein kinase involved in autophagy. The ATG1-ATG13 protein kinase complex regulates downstream events required for autophagosome enclosure and/or vacuolar delivery. The protein is Serine/threonine-protein kinase ATG1t of Arabidopsis thaliana (Mouse-ear cress).